The sequence spans 65 residues: Small, acid-soluble spore protein Tlp (65 aa).

Belongs to the Tlp family.

Its subcellular location is the spore core. The protein is Small, acid-soluble spore protein Tlp of Bacillus anthracis (strain A0248).